The chain runs to 335 residues: MGKKGLLLINIGSPKSYQVNDVKKYLSEFLMDEDVITLPYVLRWPLVNLLIVPRRAPFSAENYKKVWMKEGSPIAVYTRRFAALLQEELKDQFVVKVGLQYSEPSVESALKDLQQAGVDEILVAPMFPQYAEATNGSSFKLAERMAKKLHLTAPLRRLPAFFDDASFVGTSVKLVEETLQDKEVDHYLFSFHGLPESHVRKIPGCLTTEDCCFEKNACAKNCYRAQCFATATAIAESLNLAPSHWSVAFQSRLGRAEWLKPATDHSLEVLAKTGKKNIAVICPSFVADCIETLEEIGIGGQETFHEHGGDQYYLVPCVNDNPKWVQGFADLVKSI.

Fe cation is bound by residues H192 and E291.

This sequence belongs to the ferrochelatase family.

Its subcellular location is the cytoplasm. It carries out the reaction heme b + 2 H(+) = protoporphyrin IX + Fe(2+). It participates in porphyrin-containing compound metabolism; protoheme biosynthesis; protoheme from protoporphyrin-IX: step 1/1. In terms of biological role, catalyzes the ferrous insertion into protoporphyrin IX. The sequence is that of Ferrochelatase from Bdellovibrio bacteriovorus (strain ATCC 15356 / DSM 50701 / NCIMB 9529 / HD100).